We begin with the raw amino-acid sequence, 441 residues long: Signal recognition particle 54 kDa protein (441 aa).

GTP contacts are provided by residues glycine 103–threonine 110, aspartate 184–arginine 188, and threonine 244–aspartate 247.

This sequence belongs to the GTP-binding SRP family. SRP54 subfamily. Part of the signal recognition particle protein translocation system, which is composed of SRP and FtsY. Archaeal SRP consists of a 7S RNA molecule of 300 nucleotides and two protein subunits: SRP54 and SRP19.

It localises to the cytoplasm. The catalysed reaction is GTP + H2O = GDP + phosphate + H(+). In terms of biological role, involved in targeting and insertion of nascent membrane proteins into the cytoplasmic membrane. Binds to the hydrophobic signal sequence of the ribosome-nascent chain (RNC) as it emerges from the ribosomes. The SRP-RNC complex is then targeted to the cytoplasmic membrane where it interacts with the SRP receptor FtsY. This chain is Signal recognition particle 54 kDa protein, found in Aeropyrum pernix (strain ATCC 700893 / DSM 11879 / JCM 9820 / NBRC 100138 / K1).